The following is a 95-amino-acid chain: Large ribosomal subunit protein uL23 (95 aa).

Belongs to the universal ribosomal protein uL23 family. As to quaternary structure, part of the 50S ribosomal subunit. Contacts protein L29, and trigger factor when it is bound to the ribosome.

Its function is as follows. One of the early assembly proteins it binds 23S rRNA. One of the proteins that surrounds the polypeptide exit tunnel on the outside of the ribosome. Forms the main docking site for trigger factor binding to the ribosome. This chain is Large ribosomal subunit protein uL23, found in Desulforudis audaxviator (strain MP104C).